The sequence spans 157 residues: 3-dehydroquinate dehydratase (157 aa).

Tyr-24 functions as the Proton acceptor in the catalytic mechanism. 3 residues coordinate substrate: Asn-75, His-81, and Asp-88. Residue His-101 is the Proton donor of the active site. Substrate contacts are provided by residues 102-103 (LS) and Arg-112.

This sequence belongs to the type-II 3-dehydroquinase family. As to quaternary structure, homododecamer.

The catalysed reaction is 3-dehydroquinate = 3-dehydroshikimate + H2O. Its pathway is metabolic intermediate biosynthesis; chorismate biosynthesis; chorismate from D-erythrose 4-phosphate and phosphoenolpyruvate: step 3/7. In terms of biological role, catalyzes a trans-dehydration via an enolate intermediate. This is 3-dehydroquinate dehydratase from Brucella abortus (strain S19).